The chain runs to 523 residues: Peptide chain release factor 3 (523 aa).

One can recognise a tr-type G domain in the interval 10–277; sequence KKRRTFAIIS…SFVDLAPAPE (268 aa). Residues 19 to 26, 87 to 91, and 141 to 144 each bind GTP; these read SHPDAGKT, DTPGH, and NKLD.

It belongs to the TRAFAC class translation factor GTPase superfamily. Classic translation factor GTPase family. PrfC subfamily.

The protein localises to the cytoplasm. Increases the formation of ribosomal termination complexes and stimulates activities of RF-1 and RF-2. It binds guanine nucleotides and has strong preference for UGA stop codons. It may interact directly with the ribosome. The stimulation of RF-1 and RF-2 is significantly reduced by GTP and GDP, but not by GMP. The sequence is that of Peptide chain release factor 3 from Lactobacillus helveticus (strain DPC 4571).